Reading from the N-terminus, the 471-residue chain is Variant surface glycoprotein WRATAT A (471 aa).

Residues 1–18 (MSVLFLLLAITRTASVKA) form the signal peptide. N-linked (GlcNAc...) asparagine glycans are attached at residues Asn-61 and Asn-133. The segment at 373 to 457 (QEQTLATTGT…ANTTGSSNSF (85 aa)) is disordered. The segment covering 379–392 (TTGTKSSSPQSTQQ) has biased composition (low complexity). Disulfide bonds link Cys-401-Cys-414 and Cys-410-Cys-427. Over residues 401 to 447 (CNDKAKETECNSPCKWDKEEKDEKKRCKLSEEGKQAEKENQEGKDGK) the composition is skewed to basic and acidic residues. Positions 448–457 (ANTTGSSNSF) are enriched in polar residues. An N-linked (GlcNAc...) asparagine glycan is attached at Asn-449. A lipid anchor (GPI-anchor amidated serine) is attached at Ser-454. A propeptide spans 455–471 (NSFVIKTSPLLLAVLLL) (removed in mature form).

It localises to the cell membrane. In terms of biological role, VSG forms a coat on the surface of the parasite. The trypanosome evades the immune response of the host by expressing a series of antigenically distinct VSGs from an estimated 1000 VSG genes. This chain is Variant surface glycoprotein WRATAT A, found in Trypanosoma brucei rhodesiense.